We begin with the raw amino-acid sequence, 369 residues long: MHVVLAGGGTAGHIEPALTLAEALRRRDVGVGITLLGSPRGLETRLVPARGFDLALIPAVPLPRRLTPDLLAVPSRLRAAVGEVERILAETGADVLVGFGGYVALPGYLAARRTGLPYVVHEANARPGLANRWGARFTRYVAVADAAIRLPHAVPLGIPLRREIATLDRAARRAEARAYFGLDAEAPTLAVAGGSQGARSINRAVVAALPMLAAAGVQVLHIAGPQQIAEVESAQPKRAPDAPAYVLLPYADRMDLVYAAADLMLCRAGALTCAELAAVGLPAVYVPLPHGNGEQRLNAKPIVEAGGGVLLRDAELRGDAIRRIVLPLVTDRARLAEMAGRAAALGRRDADERLADLVEQAAAARRVVT.

UDP-N-acetyl-alpha-D-glucosamine is bound by residues 10–12, Asn-124, Arg-161, Ser-195, and Gln-295; that span reads TAG.

It belongs to the glycosyltransferase 28 family. MurG subfamily.

It is found in the cell membrane. The catalysed reaction is di-trans,octa-cis-undecaprenyl diphospho-N-acetyl-alpha-D-muramoyl-L-alanyl-D-glutamyl-meso-2,6-diaminopimeloyl-D-alanyl-D-alanine + UDP-N-acetyl-alpha-D-glucosamine = di-trans,octa-cis-undecaprenyl diphospho-[N-acetyl-alpha-D-glucosaminyl-(1-&gt;4)]-N-acetyl-alpha-D-muramoyl-L-alanyl-D-glutamyl-meso-2,6-diaminopimeloyl-D-alanyl-D-alanine + UDP + H(+). It participates in cell wall biogenesis; peptidoglycan biosynthesis. Functionally, cell wall formation. Catalyzes the transfer of a GlcNAc subunit on undecaprenyl-pyrophosphoryl-MurNAc-pentapeptide (lipid intermediate I) to form undecaprenyl-pyrophosphoryl-MurNAc-(pentapeptide)GlcNAc (lipid intermediate II). This is UDP-N-acetylglucosamine--N-acetylmuramyl-(pentapeptide) pyrophosphoryl-undecaprenol N-acetylglucosamine transferase from Acidothermus cellulolyticus (strain ATCC 43068 / DSM 8971 / 11B).